Here is a 473-residue protein sequence, read N- to C-terminus: Photosystem II CP43 reaction center protein (473 aa).

The propeptide occupies 1–14 (MKILYSLRRFYHVE). An N-acetylthreonine modification is found at T15. At T15 the chain carries Phosphothreonine. Helical transmembrane passes span 69–93 (LFEV…PHLA), 134–155 (LLGP…KDRN), 178–200 (KALY…RKIT), 255–275 (KPFA…LSYS), and 291–312 (WFNN…ASQA). Position 367 (E367) interacts with [CaMn4O5] cluster. The helical transmembrane segment at 447–471 (RARAAAAGFEKGIDRDLEPVLFMTP) threads the bilayer.

This sequence belongs to the PsbB/PsbC family. PsbC subfamily. In terms of assembly, PSII is composed of 1 copy each of membrane proteins PsbA, PsbB, PsbC, PsbD, PsbE, PsbF, PsbH, PsbI, PsbJ, PsbK, PsbL, PsbM, PsbT, PsbX, PsbY, PsbZ, Psb30/Ycf12, at least 3 peripheral proteins of the oxygen-evolving complex and a large number of cofactors. It forms dimeric complexes. The cofactor is Binds multiple chlorophylls and provides some of the ligands for the Ca-4Mn-5O cluster of the oxygen-evolving complex. It may also provide a ligand for a Cl- that is required for oxygen evolution. PSII binds additional chlorophylls, carotenoids and specific lipids..

The protein localises to the plastid. It is found in the chloroplast thylakoid membrane. Functionally, one of the components of the core complex of photosystem II (PSII). It binds chlorophyll and helps catalyze the primary light-induced photochemical processes of PSII. PSII is a light-driven water:plastoquinone oxidoreductase, using light energy to abstract electrons from H(2)O, generating O(2) and a proton gradient subsequently used for ATP formation. The chain is Photosystem II CP43 reaction center protein from Lemna minor (Common duckweed).